Consider the following 266-residue polypeptide: Glutamate racemase (266 aa).

Substrate is bound by residues 9 to 10 and 41 to 42; these read DS and YG. The Proton donor/acceptor role is filled by cysteine 72. 73–74 provides a ligand contact to substrate; that stretch reads NT. The active-site Proton donor/acceptor is the cysteine 184. 185–186 is a substrate binding site; that stretch reads TH.

This sequence belongs to the aspartate/glutamate racemases family.

It catalyses the reaction L-glutamate = D-glutamate. Its pathway is cell wall biogenesis; peptidoglycan biosynthesis. In terms of biological role, provides the (R)-glutamate required for cell wall biosynthesis. This is Glutamate racemase from Staphylococcus haemolyticus.